The primary structure comprises 1010 residues: Translation initiation factor IF-2 (1010 aa).

2 disordered regions span residues 54-350 (KGLA…FEDD) and 364-420 (PSFT…RPES). Over residues 57–70 (ASSTSKNSTGQRES) the composition is skewed to polar residues. Pro residues predominate over residues 112–124 (ISPPRPPVKPLVA). Over residues 145–155 (HSPSVKETPTE) the composition is skewed to polar residues. A compositionally biased stretch (basic and acidic residues) spans 200–258 (DRPRGEKRERGESENAPSPERRVGLAKPEKPTLNRKPDGKSPKLAEPAREVRETVELKR). Positions 378–389 (TAKAAPPGTPTA) are enriched in low complexity. Residues 406–419 (KSERQEPQEEKRPE) are compositionally biased toward basic and acidic residues. Residues 502 to 675 (RRPPVVTIMG…LLVAEVEELV (174 aa)) form the tr-type G domain. Residues 511-518 (GHVDHGKT) form a G1 region. 511 to 518 (GHVDHGKT) provides a ligand contact to GTP. The interval 536 to 540 (GITQH) is G2. Residues 561 to 564 (DTPG) are G3. GTP is bound by residues 561–565 (DTPGH) and 615–618 (NKVD). The G4 stretch occupies residues 615–618 (NKVD). Residues 651-653 (SAL) form a G5 region.

It belongs to the TRAFAC class translation factor GTPase superfamily. Classic translation factor GTPase family. IF-2 subfamily.

The protein localises to the cytoplasm. In terms of biological role, one of the essential components for the initiation of protein synthesis. Protects formylmethionyl-tRNA from spontaneous hydrolysis and promotes its binding to the 30S ribosomal subunits. Also involved in the hydrolysis of GTP during the formation of the 70S ribosomal complex. In Microcystis aeruginosa (strain NIES-843 / IAM M-2473), this protein is Translation initiation factor IF-2.